The chain runs to 1363 residues: MSSEEKIEETQQQQQESVPVKELLLKVQLPSFFNVGDDYLTIPSSYEENIADLKQALNIIVLCRNLTNYSILIKGIDIIENFGELITFEQIISHFELDKQEEQEEQGQEREISELKIVIKEKSYNLASIYEQISRFREVIGLHYIDRLSNDIGSCGGVSKFNGIQLDDIKPKEAKKEESTEKEQQEKEELSISKEEVSKISDFAKQFISDSFDGNDFTKLTKFDDINGKVKIPIKSLTISQWSPVPPFQQAKGDLLYLSLQTLEHETFNITCHFSGFFVNKSSTINFNPTIKINEKGKFNKSYLLYDLVCQLSPLFSKTIAENEINLSDSTKYPETYLLPGNSFPAYPWLVNEKDLQNVPDLSRSQLSSLINGVDGADYIKDWNNDIQSIKELPTTTVQERIIREKLIQKSLFEFNKTATETAINIIKGNIPPLNPDESSDKFIYLRNGIFYSSGTSTVNGFENTGGEEASRYVASKDLTGIKLINRHDIRGISSLVTCIVDYMGKRVVCQAPVPGILDTPVITSPTTDAEGKNEAEEPESEPVEKVVYGLSSDGSRILEDKSFEEPLKQIGDFFHLKPHKVQLSSSSSGDDVKTESNLVVSKDTKGLKGTDGRKYVIDLYRTTPRDIEFIEQHFKLDDDHQETSYPHGEALIRHEAVNEWWRRKVAVLFKKETEQLEKEGKLLDKNQDQDQENKPQIAIPTDQVVFNPDAFSSDNENEIEQDREEVREISKFIKEKLIEEFLDEIKDQVIPFDGQQLTDVLHRSGINMRYLGYVAERLVVKKEKHLVDLEELIKENEAKAEKKREEEKEKEEKEATESEDKKEKKEDKEDAEKEEAEAEEEVPTKATYQLTLANYSTLHRIIIQEMISRSVKHILRNLTKSLPSYLISTAIAHFHNCLFGGAINPTPKVDFIDEIYKNFCSKSDLESFIKLTHDDVIKLVSKEVFSRFRYKLSSNWINTIQLPQLFREIAFKYGIQWKSQNYPFTKEEFELQNNQNKETPTQIQIIETKSSKKSKKKTQTQVITEKSIQRSSIFIADDIIGFIPIIKDSSYKSTIVEEIYSNARSHLVQGNKEMGMALFNELLAINESIYGKVNPETAKFYNLVAQVYQELGYDIEAALIGRKAVILCERSCGFDSYDTITAYMNSAYYESSNEQYLNSLKLYKEAMNTWSLVYGKDHPTLINTLTNLSESLLKIKAYDSALELLQEALEITKKLNGEISEITGFIYYRIANIVVTLNKFKESKELFDKAYDIFMKLLGPDDSMTKQVAKYVSSVGLYVEYLKRQQQQQQQETQKKSKTKTKAAPVNNIATTSTSTTKNGKKSKKNNTPPQSNPEIANQSIDEILRFIEGKPSGSKKSNKKK.

TPR repeat units follow at residues 29-63 and 120-154; these read LPSFFNVGDDYLTIPSSYEENIADLKQALNIIVLC and KEKSYNLASIYEQISRFREVIGLHYIDRLSNDIGS. Residues 172 to 191 form a disordered region; it reads KEAKKEESTEKEQQEKEELS. Residues 283–316 form a TPR 3 repeat; the sequence is STINFNPTIKINEKGKFNKSYLLYDLVCQLSPLF. Positions 361-631 constitute a Clu domain; that stretch reads DLSRSQLSSL…RTTPRDIEFI (271 aa). The tract at residues 521 to 544 is disordered; that stretch reads PVITSPTTDAEGKNEAEEPESEPV. One copy of the TPR 4 repeat lies at 548–581; it reads VYGLSSDGSRILEDKSFEEPLKQIGDFFHLKPHK. A compositionally biased stretch (basic and acidic residues) spans 799–832; sequence AKAEKKREEEKEKEEKEATESEDKKEKKEDKEDA. The tract at residues 799-844 is disordered; sequence AKAEKKREEEKEKEEKEATESEDKKEKKEDKEDAEKEEAEAEEEVP. Positions 833 to 842 are enriched in acidic residues; the sequence is EKEEAEAEEE. TPR repeat units lie at residues 1057–1090, 1141–1174, 1183–1216, and 1225–1258; these read VEEIYSNARSHLVQGNKEMGMALFNELLAINESI, ITAYMNSAYYESSNEQYLNSLKLYKEAMNTWSLV, INTLTNLSESLLKIKAYDSALELLQEALEITKKL, and GFIYYRIANIVVTLNKFKESKELFDKAYDIFMKL. The interval 1291-1363 is disordered; sequence QQETQKKSKT…SGSKKSNKKK (73 aa). The span at 1330–1342 shows a compositional bias: polar residues; sequence PPQSNPEIANQSI.

Belongs to the CLU family. May associate with the eukaryotic translation initiation factor 3 (eIF-3) complex.

The protein resides in the cytoplasm. Its function is as follows. mRNA-binding protein involved in proper cytoplasmic distribution of mitochondria. This is Clustered mitochondria protein homolog from Candida albicans (strain SC5314 / ATCC MYA-2876) (Yeast).